The primary structure comprises 2383 residues: MSGPNPVPLAIVGIACRFPGDATNPERFWDLLANARSGWSRVPNDRWNEEAFWHPDPDDTNGTNNHMGGHFLNQDLARFDAGFFNVTPQEAASMDPQQRLLLETTYEALESAGIPQEHIRGSNTAAYMAMFTRDYDRNVYKDMMSIPKYHVTGTGDAILANRISHLFDLRGPSVTMDTGCSGGLTAISHACQALRSGLSDIGLAGAVNLILTPDHMVGMSNLHMLNVNGRSFSFDSRGAGYGRGEGVATLVIKRLDDAIRDKDPVRAILRDAAINQDGYTAGITLPSGRAQQALERRVWDVLNLDPATVGYVEAHGTGTLAGDSAELEGISKIFCENRDHGSPLIVGSVKSNIGHTECVSGIAAVIKSTLILENGTIPPNINFEQPRESLDLRNKKIKVPNALMPWPQTTGTARISVNSFGYGGTNAHAVLERAERVIDTTCPQEDDAPQLFIFSAASQTSLLGMLAANRDWVSENRERAWVMRDLAYTLSQRRSLLPWRFSCVAANRSELLETLSSVPQNANSIARITPGSRISFIFTGQGAQWAGMGRELLSMPTFNSSLQRSNEILQDLGCSWDLIEEVSKQKPESRLHEPELSQPLTTAIQIALVDLFREWGIVPDSVIGHSSGEIGAAYTAGHIAHCQAIKVAYFRGFSSAWAAQAHKRGAMLAVGLGEYDVEPYLEQLGQGHASIACQNSPNSTTVSGDDAAISELSEILTKESIFNRKLNITVAYHSHHMQTAACQYKAALEPLLTNPSLDTGIEMFSTVTGSIKKDAFNSNYWVENLVSKVRFCDGLQALCESTQASPLGSSKAERIFIEIGPHSALAGPTRQCIADLITPLPYSYTSGLLRETGAVKSALAMVGHIFNRGYSLNLAAISASNKTSQYATVLSNLPSYHWDHTRRHWNESRISREYRFRKHPYHDLLGLRMTEVSPLRPSWRHMIGTKGLPWLADHVVDDLVIFPGSGYLAMAIEACSQLADDRYPGREIERFSLNDIFFLKGLIIPDDGARVEVQLSLNPIEPADKDTRMNVMQHEFSVTAFTDEARWNEHCRGNIVVVFKTSSATERLVANGFTRGDMAAQLDPVSGKLTHAGQLYPELRKAGNSYGLTFNGIQRMKIGADSASSDVIIPDVVSRMPACHMRPHIIHPTTLDILLHTTLPLVHQKLGVGSVMPVHIRNMDVSADIESTPRKMFRVVTTLTSSHARAADTELFVFSEEGHVDDTPVVSAAGMELRSFVARDSNDAGSSDGHRDICSELKWIPDERFITAKHLQVLQPSILTKDALARCYALMAQYLKQMAIKHSDLSVLELGGDDTTSGATKTFLEVFHAGGTAPAMYDFCTSLKDFDVIQRKLEAFDCEKVHKMEMKRIELDAVSENRYDVVLSCNTIYNAADVKSVLSHARKLLKLDGVLLFVEDMSSRESRSSSEWSKLMSEASFKMQLAVTDNDATRQLTFFATRAVEDAIASVHNVSIVSGCNLPLHIQNFLPQIESELGSKGMQVTRSRWDKLPPNGTDIYIIVDDGSRPILSGINQDRFRIVTGLLQKTARIIWLSVQDDETFRFNPRKHLITGLSRTAHAENEGLDMVTIDVQETLNQKTQPEVIGFLSQVVGLFDCKHITREREYVYNGTDILIPRLIPHQRLNLQVSGKIGTSIEAMAFTNSSVPLKLSDGQNRLVFVENMDHKQALCHDYVEIETKAVGLPPGFNGVQSGNTVYEYAGIIIAVGSEVSTLKAGDRAVAYSSTPCANVLRVPAIQAQLIPSNLSFKDAAAMPRALMAVSHALVHIANVQPGQVVFVDDAATEIGLAAICVAQNLGSTLIAAVSTKEEAAFIKNTFKVPSRHIVPRDSYFGQRQVRTLVRPNGGLDVILGCGKSPVTAVTSELLKPFGLLVHVRNRASDPKRYDGTGYPPNLTVASFDIDSLLQASTKNSAELFQKVMEMVNRGMIPPSQSIVAIEAGIKIEEAISLAQKQGSMKKCVLEFNENSIVNVETSFHHIPSLKPHATYVVAGGLGDLGQRLLRLMAQAGARHLVSLSRKGAGSKEFRGLEKELKGVHPGCSLLAIDCDILREESVSAALAEIKQQGFPTVKGVVQSAVILKDATLDSMTAELFNSVVSVKAEGTLNLHRVFIQEELAFFISFSSVMSIIGGKAQANYNAGNAVQDAFAQFERRNPHCFYMSLNIGGIKDAAVNNDAIVQSIRRQGLTQISHEELSSYLKYAFSDDARKTGCKQPVIGFTAETIVSTTAVNGTAHTPMFTHVRQKPTAKTTVGNVNEKRSFKDIVNSGTNKGEISEFVARSICDKIADLTGIDLAEVNLDSGISDYGLDSLVSIELRNWLMREFDSPIQSSEVLDSHGIRDLAQKVVSRSRLVTTETDVVHTVNGEAPT.

The Ketosynthase family 3 (KS3) domain occupies 6–433; it reads PVPLAIVGIA…GTNAHAVLER (428 aa). Active-site for beta-ketoacyl synthase activity residues include Cys180, His315, and His355. Positions 536-828 are malonyl-CoA:ACP transacylase (MAT) domain; the sequence is FIFTGQGAQW…IGPHSALAGP (293 aa). The active-site For malonyltransferase activity is the Ser626. An N-terminal hotdog fold region spans residues 922–1062; the sequence is HDLLGLRMTE…GNIVVVFKTS (141 aa). Residues 922-1239 form a dehydratase (DH) domain region; that stretch reads HDLLGLRMTE…GMELRSFVAR (318 aa). Residues 922–1242 enclose the PKS/mFAS DH domain; the sequence is HDLLGLRMTE…LRSFVARDSN (321 aa). His954 serves as the catalytic Proton acceptor; for dehydratase activity. A C-terminal hotdog fold region spans residues 1087–1242; sequence GKLTHAGQLY…LRSFVARDSN (156 aa). Asp1152 (proton donor; for dehydratase activity) is an active-site residue. The interval 1669 to 1977 is enoylreductase (ER) domain; it reads DGQNRLVFVE…KQGSMKKCVL (309 aa). Residues 2001–2184 form a catalytic ketoreductase (KRc) domain region; it reads ATYVVAGGLG…MSLNIGGIKD (184 aa). The Carrier domain maps to 2287 to 2364; it reads EISEFVARSI…DLAQKVVSRS (78 aa). Residue Ser2324 is modified to O-(pantetheine 4'-phosphoryl)serine.

It participates in mycotoxin biosynthesis. Its function is as follows. Highly reducing polyketide synthase; part of the satratoxin SC2 cluster involved in the biosynthesis of satratoxins, trichothecene mycotoxins that are associated with human food poisonings. Satratoxins are suggested to be made by products of multiple gene clusters (SC1, SC2 and SC3) that encode 21 proteins in all, including polyketide synthases, acetyltransferases, and other enzymes expected to modify the trichothecene skeleton. SC1 encodes 10 proteins, SAT1 to SAT10. The largest are SAT8, which encodes a putative polyketide synthase (PKS) with a conventional non-reducing architecture, and SAT10, a putative protein containing four ankyrin repeats and thus may be involved in protein scaffolding. The putative short-chain reductase SAT3 may assist the PKS in some capacity. SAT6 contains a secretory lipase domain and acts probably as a trichothecene esterase. SAT5 encodes a putative acetyltransferase, and so, with SAT6, may affect endogenous protection from toxicity. The probable transcription factor SAT9 may regulate the expression of the SC1 cluster. SC2 encodes proteins SAT11 to SAT16, the largest of which encodes the putative reducing PKS SAT13. SAT11 is a cytochrome P450 monooxygenase, while SAT14 and SAT16 are probable acetyltransferases. The SC2 cluster may be regulated by the transcription factor SAT15. SC3 is a small cluster that encodes 5 proteins, SAT17 to SAT21. SAT21 is a putative MFS-type transporter which may have a role in exporting secondary metabolites. The four other proteins putatively encoded in SC3 include the taurine hydroxylase-like protein SAT17, the O-methyltransferase SAT18, the acetyltransferase SAT19, and the Cys6-type zinc finger SAT20, the latter being probably involved in regulation of SC3 expression. The protein is Highly reducing polyketide synthase SAT13 of Stachybotrys chartarum (strain CBS 109288 / IBT 7711) (Toxic black mold).